The primary structure comprises 104 residues: L-rhamnose mutarotase (104 aa).

Tyr-18 is a substrate binding site. His-22 acts as the Proton donor in catalysis. Residues Tyr-41 and 76–77 contribute to the substrate site; that span reads WW.

The protein belongs to the rhamnose mutarotase family. As to quaternary structure, homodimer.

The protein localises to the cytoplasm. The catalysed reaction is alpha-L-rhamnose = beta-L-rhamnose. Its pathway is carbohydrate metabolism; L-rhamnose metabolism. Its function is as follows. Involved in the anomeric conversion of L-rhamnose. The protein is L-rhamnose mutarotase of Oceanobacillus iheyensis (strain DSM 14371 / CIP 107618 / JCM 11309 / KCTC 3954 / HTE831).